The chain runs to 329 residues: Transmembrane protein I329L (329 aa).

An N-terminal signal peptide occupies residues 1 to 31 (MLRVFIFFVFLGSGLAGRIKPQITCKYFISE). 6 N-linked (GlcNAc...) asparagine; by host glycosylation sites follow: Asn32, Asn39, Asn44, Asn76, Asn82, and Asn101. The Extracellular portion of the chain corresponds to 32 to 239 (NNTWYKYNVT…NTERYKNCYP (208 aa)). The LRR repeat unit spans residues 112–133 (ELKFLDLRYNNLQFIDYNILRK). Residues Asn185 and Asn219 are each glycosylated (N-linked (GlcNAc...) asparagine; by host). Cysteines 195 and 237 form a disulfide. The chain crosses the membrane as a helical span at residues 240–260 (FVLVSILCSCISFLFLIICLL). Residues 261-329 (RSICKKYSCT…EKKASCSRRK (69 aa)) are Cytoplasmic-facing.

Belongs to the asfivirus I329L family. In terms of processing, highly glycosylated.

It is found in the host endoplasmic reticulum membrane. It localises to the host Golgi apparatus membrane. Its function is as follows. Viral TLR3 homolog that probably prevents TLR3 dimerization and subsequent induction of IFN. Inhibits dsRNA-stimulated activation of NF-kB and IRF3. This is Transmembrane protein I329L from Ornithodoros (relapsing fever ticks).